Reading from the N-terminus, the 381-residue chain is Succinyl-diaminopimelate desuccinylase (381 aa).

A Zn(2+)-binding site is contributed by His-68. The active site involves Asp-70. Asp-101 is a Zn(2+) binding site. Catalysis depends on Glu-135, which acts as the Proton acceptor. Zn(2+) is bound by residues Glu-136, Glu-164, and His-350.

It belongs to the peptidase M20A family. DapE subfamily. As to quaternary structure, homodimer. The cofactor is Zn(2+). Co(2+) serves as cofactor.

It carries out the reaction N-succinyl-(2S,6S)-2,6-diaminopimelate + H2O = (2S,6S)-2,6-diaminopimelate + succinate. It participates in amino-acid biosynthesis; L-lysine biosynthesis via DAP pathway; LL-2,6-diaminopimelate from (S)-tetrahydrodipicolinate (succinylase route): step 3/3. Catalyzes the hydrolysis of N-succinyl-L,L-diaminopimelic acid (SDAP), forming succinate and LL-2,6-diaminopimelate (DAP), an intermediate involved in the bacterial biosynthesis of lysine and meso-diaminopimelic acid, an essential component of bacterial cell walls. This is Succinyl-diaminopimelate desuccinylase from Neisseria gonorrhoeae (strain NCCP11945).